Here is a 372-residue protein sequence, read N- to C-terminus: GDSL esterase/lipase At1g54020 (372 aa).

A signal peptide spans 1–26 (MECSSVSVLGILLVFPLLHNLVTISG). Ser40 functions as the Nucleophile in the catalytic mechanism. 2 N-linked (GlcNAc...) asparagine glycosylation sites follow: Asn161 and Asn280. Residues Asp314 and His317 contribute to the active site.

It belongs to the 'GDSL' lipolytic enzyme family.

The protein localises to the secreted. In Arabidopsis thaliana (Mouse-ear cress), this protein is GDSL esterase/lipase At1g54020.